The chain runs to 252 residues: Probable transcriptional regulatory protein CE1776 (252 aa).

The tract at residues methionine 1 to glycine 22 is disordered.

Belongs to the TACO1 family.

The protein resides in the cytoplasm. The protein is Probable transcriptional regulatory protein CE1776 of Corynebacterium efficiens (strain DSM 44549 / YS-314 / AJ 12310 / JCM 11189 / NBRC 100395).